We begin with the raw amino-acid sequence, 702 residues long: Ribosomal RNA large subunit methyltransferase K/L (702 aa).

The THUMP domain maps to 43–154 (LIYQSLMWSR…KETASIALDL (112 aa)).

The protein belongs to the methyltransferase superfamily. RlmKL family.

The protein resides in the cytoplasm. It carries out the reaction guanosine(2445) in 23S rRNA + S-adenosyl-L-methionine = N(2)-methylguanosine(2445) in 23S rRNA + S-adenosyl-L-homocysteine + H(+). The enzyme catalyses guanosine(2069) in 23S rRNA + S-adenosyl-L-methionine = N(2)-methylguanosine(2069) in 23S rRNA + S-adenosyl-L-homocysteine + H(+). Its function is as follows. Specifically methylates the guanine in position 2445 (m2G2445) and the guanine in position 2069 (m7G2069) of 23S rRNA. The polypeptide is Ribosomal RNA large subunit methyltransferase K/L (Salmonella choleraesuis (strain SC-B67)).